The following is a 339-amino-acid chain: Methionine synthase (339 aa).

Positions 212, 214, and 295 each coordinate Zn(2+).

This sequence belongs to the archaeal MetE family. Zn(2+) is required as a cofactor.

It participates in amino-acid biosynthesis; L-methionine biosynthesis via de novo pathway. Functionally, catalyzes the transfer of a methyl group to L-homocysteine resulting in methionine formation. The physiological methyl donor is unknown. The protein is Methionine synthase of Sulfolobus acidocaldarius (strain ATCC 33909 / DSM 639 / JCM 8929 / NBRC 15157 / NCIMB 11770).